The chain runs to 371 residues: Methionine import ATP-binding protein MetN (371 aa).

The disordered stretch occupies residues 1–22; it reads MSEPFMNAPWQPPGDHPALKSP. Residues 27-268 form the ABC transporter domain; that stretch reads ILIDSVRKLY…PRHEVTRRFV (242 aa). 65–72 is a binding site for ATP; the sequence is GRSGAGKS.

Belongs to the ABC transporter superfamily. Methionine importer (TC 3.A.1.24) family. In terms of assembly, the complex is composed of two ATP-binding proteins (MetN), two transmembrane proteins (MetI) and a solute-binding protein (MetQ).

The protein localises to the cell inner membrane. It carries out the reaction L-methionine(out) + ATP + H2O = L-methionine(in) + ADP + phosphate + H(+). The catalysed reaction is D-methionine(out) + ATP + H2O = D-methionine(in) + ADP + phosphate + H(+). Part of the ABC transporter complex MetNIQ involved in methionine import. Responsible for energy coupling to the transport system. The sequence is that of Methionine import ATP-binding protein MetN from Rhodopseudomonas palustris (strain BisB5).